We begin with the raw amino-acid sequence, 67 residues long: Beta-defensin 103A (67 aa).

The signal sequence occupies residues 1 to 22; that stretch reads MRIHYLLFTLLFLFLVPVPGHG. 3 cysteine pairs are disulfide-bonded: C33-C62, C40-C55, and C45-C63.

The protein belongs to the beta-defensin family.

It localises to the secreted. Functionally, exhibits antimicrobial activity against Gram-positive and Gram-negative bacteria. The protein is Beta-defensin 103A (DEFB103A) of Gorilla gorilla gorilla (Western lowland gorilla).